The primary structure comprises 410 residues: MDRVELCNAILFGELDVARRLLDSYINPNFTINGYSPIKMAVRLRDVEMIKLLMSYNTYPDYNYPDIESELHEAVEEGDVVKVEELLDSGKFINDVIYKKGNTPLHLATISKNLDMMRLLIARGADTDVPNTDRFTPLHLAVMSKDIKGIELLLDHRACTNIEDCYGCTPLIIAMSKGDTEVCRMLLDSGANIDYFSKRPCVTAMCYAIQNNKIDMVSMFLKRGADSNIVFTVMNEEHTTLEMICNMDTNPESESVDMLIADIALRQYTNTISSDKGFSRNMTVINSKSRLKDVFEKCKIELRRINSESIRTYNILDLCLKPSKNLDENILARHSRKILGLYDNAIFYKYLLKELADTASQRAEAIESAMRVIDEKITGDETKWNWLPHEIKYNILEYIGNKELDIASMK.

ANK repeat units lie at residues 33–62, 66–95, 100–129, 133–162, 166–195, and 200–229; these read NGYSPIKMAVRLRDVEMIKLLMSYNTYPDY, DIESELHEAVEEGDVVKVEELLDSGKFIND, KGNTPLHLATISKNLDMMRLLIARGADTDV, DRFTPLHLAVMSKDIKGIELLLDHRACTNI, YGCTPLIIAMSKGDTEVCRMLLDSGANIDY, and PCVTAMCYAIQNNKIDMVSMFLKRGADSNI.

This chain is Putative ankyrin repeat protein FPV240, found in Vertebrata (FPV).